A 351-amino-acid chain; its full sequence is Biotin synthase (351 aa).

Residues 73-298 (PEVEVEGIIS…RTILRYSGGR (226 aa)) enclose the Radical SAM core domain. Cysteine 88, cysteine 92, and cysteine 95 together coordinate [4Fe-4S] cluster. [2Fe-2S] cluster-binding residues include cysteine 131, cysteine 164, cysteine 223, and arginine 293.

Belongs to the radical SAM superfamily. Biotin synthase family. As to quaternary structure, homodimer. [4Fe-4S] cluster serves as cofactor. The cofactor is [2Fe-2S] cluster.

It carries out the reaction (4R,5S)-dethiobiotin + (sulfur carrier)-SH + 2 reduced [2Fe-2S]-[ferredoxin] + 2 S-adenosyl-L-methionine = (sulfur carrier)-H + biotin + 2 5'-deoxyadenosine + 2 L-methionine + 2 oxidized [2Fe-2S]-[ferredoxin]. It participates in cofactor biosynthesis; biotin biosynthesis; biotin from 7,8-diaminononanoate: step 2/2. Its function is as follows. Catalyzes the conversion of dethiobiotin (DTB) to biotin by the insertion of a sulfur atom into dethiobiotin via a radical-based mechanism. In Frankia alni (strain DSM 45986 / CECT 9034 / ACN14a), this protein is Biotin synthase.